Consider the following 312-residue polypeptide: DNA-directed RNA polymerase subunit alpha (312 aa).

Positions 1 to 226 (MIEFEKPRIE…EHLDIFVNLT (226 aa)) are alpha N-terminal domain (alpha-NTD). An alpha C-terminal domain (alpha-CTD) region spans residues 243–312 (KEKMLEMTIE…DLGLGLRKDD (70 aa)).

It belongs to the RNA polymerase alpha chain family. Homodimer. The RNAP catalytic core consists of 2 alpha, 1 beta, 1 beta' and 1 omega subunit. When a sigma factor is associated with the core the holoenzyme is formed, which can initiate transcription.

The catalysed reaction is RNA(n) + a ribonucleoside 5'-triphosphate = RNA(n+1) + diphosphate. Functionally, DNA-dependent RNA polymerase catalyzes the transcription of DNA into RNA using the four ribonucleoside triphosphates as substrates. The polypeptide is DNA-directed RNA polymerase subunit alpha (Enterococcus faecalis (strain ATCC 700802 / V583)).